Reading from the N-terminus, the 347-residue chain is DNA polymerase III subunit delta (347 aa).

It belongs to the DNA polymerase HolA subunit family. In terms of assembly, component of the DNA clamp loading complex consisting of tau(3):delta(1):delta'(1). The DNA polymerase III holoenzyme complex contains at least 10 different subunits organized into 3 functionally essential subassemblies: the Pol III core, the beta sliding clamp processivity factor and the clamp-loading complex. The Pol III core (subunits alpha, epsilon and theta) contains the polymerase and the 3'-5' exonuclease proofreading activities. The polymerase is tethered to the template via the dimeric beta sliding clamp processivity factor. The DNA clamp-loading complex assembles the beta sliding clamp onto the primed template and plays a central role in the organization and communication at the replication fork.

Its subcellular location is the cytoplasm. It is found in the nucleoid. It catalyses the reaction DNA(n) + a 2'-deoxyribonucleoside 5'-triphosphate = DNA(n+1) + diphosphate. Its function is as follows. Part of the beta sliding clamp loading complex, which hydrolyzes ATP to load the beta clamp onto primed DNA to form the DNA replication pre-initiation complex. DNA polymerase III is a complex, multichain enzyme responsible for most of the replicative synthesis in bacteria. This DNA polymerase also exhibits 3'-5' exonuclease activity. The delta subunit is the wrench that will open the beta subunit dimer. The DNA clamp loading complex (tau(3),delta,delta') is thought to load beta dimers onto DNA by binding ATP which alters the complex's conformation so it can bind beta sliding clamp dimers and open them at one interface. Primed DNA is recognized, ATP is hydrolyzed releasing the clamp loading complex and closing the beta sliding clamp ring around the primed DNA. This is DNA polymerase III subunit delta from Bacillus subtilis (strain 168).